The chain runs to 441 residues: Maltose-6'-phosphate glucosidase MalH (441 aa).

4–70 is a binding site for NAD(+); the sequence is FSVVIAGGGS…PEIEFLATTN (67 aa). Substrate contacts are provided by Arg-93 and Asn-147. Cys-169 serves as a coordination point for Mn(2+). The Proton donor role is filled by Asp-170. Mn(2+) is bound at residue His-200. The Proton acceptor role is filled by Tyr-264. Arg-284 lines the substrate pocket.

In terms of assembly, homotetramer. Requires NAD(+) as cofactor. Mn(2+) is required as a cofactor.

It catalyses the reaction alpha-maltose 6'-phosphate + H2O = D-glucose 6-phosphate + D-glucose. Functionally, catalyzes the hydrolysis of O-alpha-linked disaccharide 6-phosphates, including maltose-6'P and all five phosphorylated isomers of sucrose, but not sucrose-6P. Does not hydrolyze beta-linked disaccharide 6-phosphates such as cellobiose-6'P and gentiobiose-6'P. Is involved in the dissimilation of maltose and related O-alpha-linked glucosides produced via the phosphoenolpyruvate-dependent sugar phosphotransferase system (PEP-PTS). The chain is Maltose-6'-phosphate glucosidase MalH (malH) from Clostridium acetobutylicum (strain ATCC 824 / DSM 792 / JCM 1419 / IAM 19013 / LMG 5710 / NBRC 13948 / NRRL B-527 / VKM B-1787 / 2291 / W).